The primary structure comprises 69 residues: Putative membrane protein insertion efficiency factor (69 aa).

It belongs to the UPF0161 family.

Its subcellular location is the cell membrane. Could be involved in insertion of integral membrane proteins into the membrane. The sequence is that of Putative membrane protein insertion efficiency factor from Alkaliphilus oremlandii (strain OhILAs) (Clostridium oremlandii (strain OhILAs)).